A 635-amino-acid polypeptide reads, in one-letter code: Threonine--tRNA ligase (635 aa).

The 61-residue stretch at 1-61 (MPIITLPDGN…EKDANIAIIT (61 aa)) folds into the TGS domain. Residues 242–533 (DHRKIGKQLD…LTEEYAGVYP (292 aa)) form a catalytic region. 3 residues coordinate Zn(2+): Cys-333, His-384, and His-510.

The protein belongs to the class-II aminoacyl-tRNA synthetase family. In terms of assembly, homodimer. It depends on Zn(2+) as a cofactor.

The protein localises to the cytoplasm. The enzyme catalyses tRNA(Thr) + L-threonine + ATP = L-threonyl-tRNA(Thr) + AMP + diphosphate + H(+). Catalyzes the attachment of threonine to tRNA(Thr) in a two-step reaction: L-threonine is first activated by ATP to form Thr-AMP and then transferred to the acceptor end of tRNA(Thr). Also edits incorrectly charged L-seryl-tRNA(Thr). In Psychromonas ingrahamii (strain DSM 17664 / CCUG 51855 / 37), this protein is Threonine--tRNA ligase.